The chain runs to 441 residues: Ribulose bisphosphate carboxylase large chain (441 aa).

K4 bears the N6,N6,N6-trimethyllysine mark. Substrate contacts are provided by N113 and T163. Residue K165 is the Proton acceptor of the active site. K167 contributes to the substrate binding site. Positions 191, 193, and 194 each coordinate Mg(2+). An N6-carboxylysine modification is found at K191. H284 acts as the Proton acceptor in catalysis. 3 residues coordinate substrate: R285, H317, and S369.

The protein belongs to the RuBisCO large chain family. Type I subfamily. In terms of assembly, heterohexadecamer of 8 large chains and 8 small chains; disulfide-linked. The disulfide link is formed within the large subunit homodimers. The cofactor is Mg(2+). In terms of processing, the disulfide bond which can form in the large chain dimeric partners within the hexadecamer appears to be associated with oxidative stress and protein turnover.

The protein localises to the plastid. It is found in the chloroplast. The enzyme catalyses 2 (2R)-3-phosphoglycerate + 2 H(+) = D-ribulose 1,5-bisphosphate + CO2 + H2O. It catalyses the reaction D-ribulose 1,5-bisphosphate + O2 = 2-phosphoglycolate + (2R)-3-phosphoglycerate + 2 H(+). Its function is as follows. RuBisCO catalyzes two reactions: the carboxylation of D-ribulose 1,5-bisphosphate, the primary event in carbon dioxide fixation, as well as the oxidative fragmentation of the pentose substrate in the photorespiration process. Both reactions occur simultaneously and in competition at the same active site. The chain is Ribulose bisphosphate carboxylase large chain from Darlingtonia californica (California pitcher plant).